The primary structure comprises 202 residues: Holliday junction branch migration complex subunit RuvA (202 aa).

The domain I stretch occupies residues 1–64 (MIDYVSGTLV…EDDESLYGFA (64 aa)). The tract at residues 65-143 (TKAERTVFET…DLDVLEDTSP (79 aa)) is domain II. Positions 144–149 (LSGGSD) are flexible linker. Positions 150–202 (ARAEARADALEALTELGLSKADAERSIRQVLRDNAGIQSADELVRRALKADQE) are domain III.

The protein belongs to the RuvA family. Homotetramer. Forms an RuvA(8)-RuvB(12)-Holliday junction (HJ) complex. HJ DNA is sandwiched between 2 RuvA tetramers; dsDNA enters through RuvA and exits via RuvB. An RuvB hexamer assembles on each DNA strand where it exits the tetramer. Each RuvB hexamer is contacted by two RuvA subunits (via domain III) on 2 adjacent RuvB subunits; this complex drives branch migration. In the full resolvosome a probable DNA-RuvA(4)-RuvB(12)-RuvC(2) complex forms which resolves the HJ.

It is found in the cytoplasm. Functionally, the RuvA-RuvB-RuvC complex processes Holliday junction (HJ) DNA during genetic recombination and DNA repair, while the RuvA-RuvB complex plays an important role in the rescue of blocked DNA replication forks via replication fork reversal (RFR). RuvA specifically binds to HJ cruciform DNA, conferring on it an open structure. The RuvB hexamer acts as an ATP-dependent pump, pulling dsDNA into and through the RuvAB complex. HJ branch migration allows RuvC to scan DNA until it finds its consensus sequence, where it cleaves and resolves the cruciform DNA. The sequence is that of Holliday junction branch migration complex subunit RuvA from Salinibacter ruber (strain DSM 13855 / M31).